The chain runs to 115 residues: Large ribosomal subunit protein bL20 (115 aa).

The protein belongs to the bacterial ribosomal protein bL20 family.

Its function is as follows. Binds directly to 23S ribosomal RNA and is necessary for the in vitro assembly process of the 50S ribosomal subunit. It is not involved in the protein synthesizing functions of that subunit. The polypeptide is Large ribosomal subunit protein bL20 (Synechococcus sp. (strain CC9902)).